The sequence spans 512 residues: Protein spinster homolog 3 (512 aa).

The tract at residues 1-30 (MAGGMSAECPEPGPGGLQGQSPGPGRQCPP) is disordered. The next 12 helical transmembrane spans lie at 50-70 (VLCYINLLNYMNWFIIAGVLL), 84-104 (GLLQTVFVSCLLLSAPVFGYL), 112-132 (ATMSFGILLWSGAGLSSSFIS), 145-165 (IVGTGSASYSTIAPTVLGDLF), 173-193 (VLAVFYIFIPVGSGLGYVLGS), 204-224 (WALRVMPCLEAVALILLILLV), 260-280 (FVWSTLGVTAMAFVTGALGFW), 309-329 (LIFGALTIMTGVIGVILGAEA), 343-365 (LICASSLLATAPCLYLALVLAPT), 377-397 (GELLLSCNWAVVADILLSVVV), 411-431 (VGHILGDAGSPYLTGLISSVL), and 450-470 (FLCCAFVIALGGGCFLLTALY). The disordered stretch occupies residues 481–512 (PVTGTPDSNDVDSNDLERQGLLSGAGASTEEP).

This sequence belongs to the major facilitator superfamily. Spinster (TC 2.A.1.49) family.

Its subcellular location is the membrane. Its function is as follows. Sphingolipid transporter. In Homo sapiens (Human), this protein is Protein spinster homolog 3 (SPNS3).